A 727-amino-acid polypeptide reads, in one-letter code: YTH domain-containing protein 1 (727 aa).

Positions 1–12 are enriched in basic and acidic residues; it reads MAADSREEKDGE. The tract at residues 1 to 338 is disordered; that stretch reads MAADSREEKD…KHEKLSSSVR (338 aa). Residue Ser35 is modified to Phosphoserine. The segment covering 50–59 has biased composition (basic and acidic residues); the sequence is DRMESTDTKR. Over residues 63-90 the composition is skewed to polar residues; it reads SVHSRQLVSKPLSSSVSNNKRIVSTKGK. Over residues 91–115 the composition is skewed to basic and acidic residues; the sequence is SATEYKNEEYQRSERNKRLDADRKI. A Glycyl lysine isopeptide (Lys-Gly) (interchain with G-Cter in SUMO2) cross-link involves residue Lys96. Phosphoserine is present on residues Ser118 and Ser120. The segment covering 124–144 has biased composition (basic and acidic residues); the sequence is EPYKNQPEKTCVRKRDPERRA. Ser146 carries the phosphoserine modification. At Thr148 the chain carries Phosphothreonine. Basic and acidic residues-rich tracts occupy residues 151 to 163 and 170 to 185; these read GSER…DRRA and SKEE…DHET. The segment covering 199–254 has biased composition (acidic residues); it reads ENEEEGVEEDVEEDEEVEEDAEEDEEVDEDGEEEEEEEEEEEEEEEEEEEEYEQDE. The segment covering 255 to 270 has biased composition (basic and acidic residues); that stretch reads RDQKEEGNDYDTRSEA. The span at 280-289 shows a compositional bias: polar residues; sequence FTDGSVRSGS. 5 positions are modified to phosphoserine: Ser308, Ser315, Ser317, Ser318, and Ser320. Positions 315-325 are enriched in low complexity; sequence SGSSASESYAG. Residues 355-492 form the YTH domain; that stretch reads ARFFLIKSNN…ECGTQLCLLF (138 aa). Residues 361–363 and 377–378 each bind RNA; these read KSN and WS. The residue at position 424 (Ser424) is a Phosphoserine. Position 428 (Trp428) interacts with RNA. Residue Ser435 is modified to Phosphoserine. Asp476 is a binding site for RNA. The span at 508–523 shows a compositional bias: basic residues; it reads RHKRRMHSQPRSRGRP. 3 disordered regions span residues 508–564, 607–643, and 669–727; these read RHKR…PGYL, GMPP…HPVP, and AVVS…RYRR. A compositionally biased stretch (basic and acidic residues) spans 524–564; the sequence is SRREPVRDVGRRRPEDYDIHNSRKKPRIDYPPEFHQRPGYL. The residue at position 545 (Ser545) is a Phosphoserine. The span at 679-727 shows a compositional bias: basic and acidic residues; it reads RERDRERERDRPRDNRRDRERDRGRDRERERERLCDRDRDRGERGRYRR.

As to quaternary structure, interacts with SRSF1. Interacts with SRSF2. Interacts with SRSF3. Interacts with SRSF7. Interacts with SRSF10. Interacts with CPSF6. Interacts with KHDRBS1/SAM68. Interacts with TRA2B. Interacts with KHDRBS3. Interacts with EMD. Interacts with RBMX. Interacts with ZCCHC8. In terms of processing, tyrosine phosphorylated.

Its subcellular location is the nucleus. It is found in the nucleus speckle. Regulator of alternative splicing that specifically recognizes and binds N6-methyladenosine (m6A)-containing RNAs. M6A is a modification present at internal sites of mRNAs and some non-coding RNAs and plays a role in the efficiency of mRNA splicing, processing and stability. Acts as a key regulator of exon-inclusion or exon-skipping during alternative splicing via interaction with mRNA splicing factors SRSF3 and SRSF10. Specifically binds m6A-containing mRNAs and promotes recruitment of SRSF3 to its mRNA-binding elements adjacent to m6A sites, leading to exon-inclusion during alternative splicing. In contrast, interaction with SRSF3 prevents interaction with SRSF10, a splicing factor that promotes exon skipping: this prevents SRSF10 from binding to its mRNA-binding sites close to m6A-containing regions, leading to inhibit exon skipping during alternative splicing. May also regulate alternative splice site selection. Also involved in nuclear export of m6A-containing mRNAs via interaction with SRSF3: interaction with SRSF3 facilitates m6A-containing mRNA-binding to both SRSF3 and NXF1, promoting mRNA nuclear export. Involved in S-adenosyl-L-methionine homeostasis by regulating expression of MAT2A transcripts, probably by binding m6A-containing MAT2A mRNAs. Also recognizes and binds m6A on other RNA molecules. Involved in random X inactivation mediated by Xist RNA: recognizes and binds m6A-containing Xist and promotes transcription repression activity of Xist. Also recognizes and binds m6A-containing single-stranded DNA. Involved in germline development: required for spermatogonial development in males and oocyte growth and maturation in females, probably via its role in alternative splicing. The polypeptide is YTH domain-containing protein 1 (Homo sapiens (Human)).